The following is a 710-amino-acid chain: Pentatricopeptide repeat-containing protein At3g14330 (710 aa).

PPR repeat units follow at residues 166–196 (NPKL…VTDS), 200–234 (TEKV…FIEP), 235–269 (GNFS…KEKV), 270–304 (DQVV…NVVT), 305–331 (WNSL…MQEE), 336–370 (SWAT…KEKP), 371–401 (DVPL…MLTK), 402–436 (DLAS…GVAP), 437–467 (DGIT…MKTE), and 473–503 (ALEH…MPFK). Residues 508 to 583 (IWGSLLNSCR…EAGCSWVQVK (76 aa)) are type E motif. Positions 584–615 (DKIQIFVAGGGYEFRNSDEYKKVWTELQEAIE) are type E(+) motif. The tract at residues 616-710 (KSGYSPNTSV…DGICSCKDYW (95 aa)) is type DYW motif.

Belongs to the PPR family. PCMP-H subfamily.

This chain is Pentatricopeptide repeat-containing protein At3g14330 (PCMP-H57), found in Arabidopsis thaliana (Mouse-ear cress).